The following is a 550-amino-acid chain: Probable methionine--tRNA ligase, cytoplasmic (550 aa).

A 'HIGH' region motif is present at residues 10 to 20 (PYVNNQPHLGN). A 'KMSKS' region motif is present at residues 328-332 (KFSKS). ATP is bound at residue Lys-331.

Belongs to the class-I aminoacyl-tRNA synthetase family.

The protein localises to the cytoplasm. It catalyses the reaction tRNA(Met) + L-methionine + ATP = L-methionyl-tRNA(Met) + AMP + diphosphate. This Encephalitozoon cuniculi (strain GB-M1) (Microsporidian parasite) protein is Probable methionine--tRNA ligase, cytoplasmic.